The primary structure comprises 622 residues: ATP-dependent lipid A-core flippase (622 aa).

Transmembrane regions (helical) follow at residues 32-52, 91-111, 192-212, 286-306, and 312-332; these read IVAA…LAAF, VWGT…LVVI, IVLL…FPLL, SPFS…IALW, and YTTI…YAPI. One can recognise an ABC transmembrane type-1 domain in the interval 33–344; the sequence is VAALIAIFGV…LANISIPMQT (312 aa). The ABC transporter domain maps to 378 to 611; it reads FRNVDVEYRS…NGYYTMLRNI (234 aa). 410 to 417 is an ATP binding site; the sequence is GRSGSGKS.

Belongs to the ABC transporter superfamily. Lipid exporter (TC 3.A.1.106) family. As to quaternary structure, homodimer.

The protein localises to the cell inner membrane. It catalyses the reaction ATP + H2O + lipid A-core oligosaccharideSide 1 = ADP + phosphate + lipid A-core oligosaccharideSide 2.. Its function is as follows. Involved in lipopolysaccharide (LPS) biosynthesis. Translocates lipid A-core from the inner to the outer leaflet of the inner membrane. Transmembrane domains (TMD) form a pore in the inner membrane and the ATP-binding domain (NBD) is responsible for energy generation. This is ATP-dependent lipid A-core flippase from Neisseria gonorrhoeae (strain ATCC 700825 / FA 1090).